The primary structure comprises 493 residues: MYRLSQYETPLFTALVEHSKRNPIQFHIPGHKKGQGMDPEFREFIGHNALAIDLINIAPLDDLHHPKGMIKEAQDLAAAAFGADHTFFSIQGTSGAIMTMVMSVCGPGDKILVPRNVHKSVMSAIIFSGAKPIFMHPEIDPKLGISHGITIQSVKKALEEHSDAKGLLVINPTYFGFAADLEQIVQLAHSYDIPVLVDEAHGVHIHFHDELPMSAMQAGADMAATSVHKLGGSLTQSSILNVKEGLVNVKHVQSIISMLTTTSTSYILLASLDVARKRLATEGKALIEQTIQLAEQVRNAINDIEHLYCPGKEMLGTDATFNYDPTKIIVSVKDLGITGHQAEVWLREQYNIEVELSDLYNILCLVTFGDTESETNTLIAALQDLSAIFKNKADKGVRIQVEIPEIPVLALSPRDAFYSETEVIPFENAAGRIIADFVMVYPPGIPIFTPGEIITQDNLEYIRKNLEAGLPVQGPEDMTLQTLRVIKEYKPIS.

K229 bears the N6-(pyridoxal phosphate)lysine mark.

The protein belongs to the Orn/Lys/Arg decarboxylase class-I family. Requires pyridoxal 5'-phosphate as cofactor.

It localises to the cytoplasm. It catalyses the reaction L-arginine + H(+) = agmatine + CO2. Its pathway is amine and polyamine biosynthesis; agmatine biosynthesis; agmatine from L-arginine: step 1/1. Functionally, catalyzes the formation of agmatine from arginine. The chain is Arginine decarboxylase (speA) from Bacillus anthracis.